We begin with the raw amino-acid sequence, 383 residues long: Guanine nucleotide-binding protein G(s) subunit alpha (383 aa).

The interval 1 to 31 (MGCFGSAGSKQSDSNSSEDTKSQKRRSDAIT) is disordered. Gly-2 carries N-palmitoyl glycine lipidation. Cys-3 is lipidated: S-palmitoyl cysteine. Residues 8–17 (GSKQSDSNSS) are compositionally biased toward polar residues. Basic and acidic residues predominate over residues 18–31 (EDTKSQKRRSDAIT). In terms of domain architecture, G-alpha spans 43 to 383 (ATHRLLLLGA…RMHLRQYELL (341 aa)). Positions 46 to 59 (RLLLLGAGESGKST) are G1 motif. GTP contacts are provided by residues 51 to 58 (GAGESGKS), 187 to 193 (LRCRVLT), 212 to 216 (DVGGQ), 281 to 284 (NKQD), and Ala-355. 2 residues coordinate Mg(2+): Ser-58 and Thr-193. The interval 185-193 (DILRCRVLT) is G2 motif. Positions 208 to 217 (FHMFDVGGQR) are G3 motif. The segment at 277–284 (ILFLNKQD) is G4 motif. Residues 353–358 (TCAVDT) are G5 motif.

This sequence belongs to the G-alpha family. G(s) subfamily. G proteins are composed of 3 units; alpha, beta and gamma. The alpha chain contains the guanine nucleotide binding site.

Its function is as follows. Guanine nucleotide-binding proteins (G proteins) are involved as modulators or transducers in various transmembrane signaling systems. The G(s) protein is involved in hormonal regulation of adenylate cyclase: it activates the cyclase. Participates in olfactory signal transduction. This chain is Guanine nucleotide-binding protein G(s) subunit alpha, found in Anopheles gambiae (African malaria mosquito).